The following is a 422-amino-acid chain: Mitogen-activated protein kinase spm1 (422 aa).

A Protein kinase domain is found at 21-314 (FKVVKELGQG…VDDALEHPYL (294 aa)). ATP is bound by residues 27-35 (LGQGAYGIV) and lysine 52. Aspartate 149 acts as the Proton acceptor in catalysis. Threonine 186 bears the Phosphothreonine mark. The short motif at 186 to 188 (TEY) is the TXY element. Phosphotyrosine is present on tyrosine 188. A disordered region spans residues 359–422 (RRRSHPTNPT…DHKSDDNRHN (64 aa)). Positions 364-379 (PTNPTVNIPQPAQTVP) are enriched in polar residues. A compositionally biased stretch (low complexity) spans 380 to 397 (SNDNGSFNVSSSSSSQTS). Residues 411–422 (AIDHKSDDNRHN) are compositionally biased toward basic and acidic residues.

It belongs to the protein kinase superfamily. CMGC Ser/Thr protein kinase family. MAP kinase subfamily. Requires Mg(2+) as cofactor. In terms of processing, dually phosphorylated on Thr-186 and Tyr-188, which activates the enzyme.

The enzyme catalyses L-seryl-[protein] + ATP = O-phospho-L-seryl-[protein] + ADP + H(+). It carries out the reaction L-threonyl-[protein] + ATP = O-phospho-L-threonyl-[protein] + ADP + H(+). Activated by tyrosine and threonine phosphorylation by skh1/pek1. Its function is as follows. Regulates cell integrity and functions coordinately with the protein kinase C pathway (pck1 and pck2). Involved the regulation of wall architecture, cell shape, cytokinesis in exponential and stationary phase, and metabolism of ions. The protein is Mitogen-activated protein kinase spm1 (spm1) of Schizosaccharomyces pombe (strain 972 / ATCC 24843) (Fission yeast).